Reading from the N-terminus, the 500-residue chain is MSSKNPVDEQPCCGSHEGSHQDPAPETLVVEKEVNNGEKKIRIAVVGCSHGEMDAIYETMTLIEQKNGYKFDLLICCGDYQAVRNYGDLPHMSIPPKYRSLQTFYKYYSGEQKAPVLTLFIGGNHEASGYLCELPNGGWVAPNIYYMGFANCIRFANLRIAGLSGIFSQGDFQFSHYERPSFSERDVKSAYHVRNVDMFRLRQLKSDNENKISNPIDIMLSHDWPGGIPDFGDKEWLFRKKDLFEADHNSGKLGNPSGMKLIYDCRPRYYLAAHLHIAFAALVPHKGSGSGRPQPTRFLSLDKPIPGRKFMQALELNVADDAKLELSYDPQWLAILRNTDLLTTGTKEQLILPDMASNRPCVYERKDFRPTAEELKEIEKLGDLTIRTDSFQQTAPPLKEITESSKNVPPSAYYRNPQSAEFCQWLGIRDLNQMLVEKTSEHVGTPYYMMTQDDANAKPNQDDVDFGDEDFVIDRGHTSDEPEAKKSRLDEDKFEAVPSE.

The segment at 1-25 is disordered; it reads MSSKNPVDEQPCCGSHEGSHQDPAP. Residues Cys48, His50, Asp79, and Asn124 each coordinate a divalent metal cation. The lariat recognition loop stretch occupies residues 164–194; that stretch reads SGIFSQGDFQFSHYERPSFSERDVKSAYHVR. Positions 222, 274, and 276 each coordinate a divalent metal cation. Residues 453 to 500 are disordered; it reads DDANAKPNQDDVDFGDEDFVIDRGHTSDEPEAKKSRLDEDKFEAVPSE. A compositionally biased stretch (acidic residues) spans 462 to 471; it reads DDVDFGDEDF. A compositionally biased stretch (basic and acidic residues) spans 472–500; it reads VIDRGHTSDEPEAKKSRLDEDKFEAVPSE.

The protein belongs to the lariat debranching enzyme family. Fe(2+) is required as a cofactor. Requires Zn(2+) as cofactor. The cofactor is Mn(2+).

The protein localises to the nucleus. Active in presence of diverse metals including Fe(2+), Zn(2+), Mn(2+). Binds two metal cations in two adjacent alpha and beta metal-binding pockets. Cleaves the 2'-5' phosphodiester linkage at the branch point of lariat intron pre-mRNAs after splicing and converts them into linear molecules that are subsequently degraded. It thereby facilitates ribonucleotide turnover. The protein is Lariat debranching enzyme of Caenorhabditis elegans.